The sequence spans 379 residues: Chaperone protein DnaJ (379 aa).

One can recognise a J domain in the interval 5-69; it reads EYYERLGVDK…QKRAAYDQYG (65 aa). The CR-type zinc-finger motif lies at 141 to 223; that stretch reads GVEKQVKYNR…CHGSGHEKVA (83 aa). Residues C154, C157, C171, C174, C197, C200, C211, and C214 each contribute to the Zn(2+) site. CXXCXGXG motif repeat units lie at residues 154–161, 171–178, 197–204, and 211–218; these read CHTCGGSG, CHKCGGRG, CDVCNGTG, and CETCHGSG.

It belongs to the DnaJ family. In terms of assembly, homodimer. Zn(2+) is required as a cofactor.

It is found in the cytoplasm. Participates actively in the response to hyperosmotic and heat shock by preventing the aggregation of stress-denatured proteins and by disaggregating proteins, also in an autonomous, DnaK-independent fashion. Unfolded proteins bind initially to DnaJ; upon interaction with the DnaJ-bound protein, DnaK hydrolyzes its bound ATP, resulting in the formation of a stable complex. GrpE releases ADP from DnaK; ATP binding to DnaK triggers the release of the substrate protein, thus completing the reaction cycle. Several rounds of ATP-dependent interactions between DnaJ, DnaK and GrpE are required for fully efficient folding. Also involved, together with DnaK and GrpE, in the DNA replication of plasmids through activation of initiation proteins. The protein is Chaperone protein DnaJ of Lactococcus lactis subsp. lactis (strain IL1403) (Streptococcus lactis).